A 140-amino-acid chain; its full sequence is Nucleoside diphosphate kinase (140 aa).

Residues Lys-11, Phe-59, Arg-87, Thr-93, Arg-104, and Asn-114 each coordinate ATP. The active-site Pros-phosphohistidine intermediate is His-117.

The protein belongs to the NDK family. In terms of assembly, homotetramer. It depends on Mg(2+) as a cofactor.

The protein localises to the cytoplasm. It catalyses the reaction a 2'-deoxyribonucleoside 5'-diphosphate + ATP = a 2'-deoxyribonucleoside 5'-triphosphate + ADP. The catalysed reaction is a ribonucleoside 5'-diphosphate + ATP = a ribonucleoside 5'-triphosphate + ADP. Major role in the synthesis of nucleoside triphosphates other than ATP. The ATP gamma phosphate is transferred to the NDP beta phosphate via a ping-pong mechanism, using a phosphorylated active-site intermediate. The chain is Nucleoside diphosphate kinase from Rickettsia canadensis (strain McKiel).